The chain runs to 728 residues: Catalase-peroxidase 1 (728 aa).

The first 16 residues, 1–16, serve as a signal peptide directing secretion; that stretch reads MDKAQHTQGKCPVAHG. The tryptophyl-tyrosyl-methioninium (Trp-Tyr) (with M-251) cross-link spans 97-225; sequence WHSAGTYRMA…LAAVMMGLIY (129 aa). The active-site Proton acceptor is the His-98. Residues 225–251 constitute a cross-link (tryptophyl-tyrosyl-methioninium (Tyr-Met) (with W-97)); sequence YVNPEGVDGQPDPLKTAQDIRVTFERM. His-266 is a binding site for heme b.

The protein belongs to the peroxidase family. Peroxidase/catalase subfamily. As to quaternary structure, homodimer or homotetramer. It depends on heme b as a cofactor. Post-translationally, formation of the three residue Trp-Tyr-Met cross-link is important for the catalase, but not the peroxidase activity of the enzyme.

It catalyses the reaction H2O2 + AH2 = A + 2 H2O. The catalysed reaction is 2 H2O2 = O2 + 2 H2O. Bifunctional enzyme with both catalase and broad-spectrum peroxidase activity. The sequence is that of Catalase-peroxidase 1 from Shewanella frigidimarina (strain NCIMB 400).